Consider the following 475-residue polypeptide: Protein transport protein Sec61 subunit alpha (475 aa).

At 1 to 32 (MGFRFLDIVKPFTSLVPEVGQPDRKIPFREKV) the chain is on the cytoplasmic side. The chain crosses the membrane as a helical span at residues 33–53 (LWTAICLFIFLVCSQIPLYGI). Residues 54–75 (RSTDSSDPFYWAKVIMASNRGT) lie on the Lumenal side of the membrane. Residues 76-96 (LMELGISPIVTSGMVMQLLAG) form a helical membrane-spanning segment. The Cytoplasmic portion of the chain corresponds to 97–118 (AKLIEIDQSVKADRDLFSAAQK). Residues 119–139 (LFGMLICVGQGVAYIWSGSYG) traverse the membrane as a helical segment. The Lumenal segment spans residues 140–145 (DPAVLG). Residues 146-166 (FGNCFLIVLQLFFAGIIVMLL) form a helical membrane-spanning segment. The Cytoplasmic segment spans residues 167 to 173 (DELLQKG). The helical transmembrane segment at 174–194 (YGIGSGISLFIATNICETIVW) threads the bilayer. Topologically, residues 195–241 (KTFSPTTVSVGKGTEFEGAVIALFHLLLTRNDKVRALKEAFYRQNLP) are lumenal. The chain crosses the membrane as a helical span at residues 242-262 (NITNLLATVLIFMVVIYFQGF). The Cytoplasmic portion of the chain corresponds to 263–289 (RVDLPVKSTRVSGQQGTYPIKLFYTSN). Residues 290–310 (IPIILQSALVSNLYFISQLLY) form a helical membrane-spanning segment. At 311–353 (RRFPDNILVNLFGAWRTSEYSQQMIPVSGLTYYISSPNNMSAV) the chain is on the lumenal side. The helical transmembrane segment at 354–374 (LADPFHALFYITFMLTSCALF) threads the bilayer. The Cytoplasmic portion of the chain corresponds to 375-411 (SKVWIEVSGSSARDVAKQLKDQQMTMKGHRDTSVIKE). A helical membrane pass occupies residues 412-434 (LNRYIPTAAAFGGLCIGALTVVA). Residues 435–440 (DFMGAI) are Lumenal-facing. Residues 441–461 (GSGTGILLAVTIIYQYFETFV) form a helical membrane-spanning segment. The Cytoplasmic portion of the chain corresponds to 462–475 (KEQQELSGGIGGLF).

It belongs to the SecY/SEC61-alpha family. In terms of assembly, heterotrimeric complex composed of SEC61-alpha, SEC61-beta and SEC61-gamma.

Its subcellular location is the endoplasmic reticulum membrane. Functionally, appears to play a crucial role in the insertion of secretory and membrane polypeptides into the ER. It is required for assembly of membrane and secretory proteins. Found to be tightly associated with membrane-bound ribosomes, either directly or through adaptor proteins. The chain is Protein transport protein Sec61 subunit alpha (sec61a) from Dictyostelium discoideum (Social amoeba).